We begin with the raw amino-acid sequence, 611 residues long: Angiotensin-converting enzyme (611 aa).

The first 17 residues, 1-17 (MKLLVVTILAGLAVCHG), serve as a signal peptide directing secretion. The Peptidase M2 domain occupies 19–607 (TKEEIVATEY…VESLCHQRYK (589 aa)). N-linked (GlcNAc...) asparagine glycosylation is present at Asn-53. A disulfide bridge connects residues Cys-133 and Cys-141. The N-linked (GlcNAc...) asparagine glycan is linked to Asn-196. Cys-336 and Cys-354 form a disulfide bridge. His-367 contacts Zn(2+). The active-site Proton acceptor is the Glu-368. Residues His-371 and Glu-395 each coordinate Zn(2+). Catalysis depends on His-497, which acts as the Proton donor. Cys-522 and Cys-540 are oxidised to a cystine. N-linked (GlcNAc...) asparagine glycosylation is present at Asn-531.

Belongs to the peptidase M2 family. The cofactor is Zn(2+). As to expression, expressed in the compound ganglion and in the posterior region of the midgut.

The protein resides in the secreted. It localises to the extracellular space. The enzyme catalyses Release of a C-terminal dipeptide, oligopeptide-|-Xaa-Yaa, when Xaa is not Pro, and Yaa is neither Asp nor Glu. Thus, conversion of angiotensin I to angiotensin II, with increase in vasoconstrictor activity, but no action on angiotensin II.. Functionally, involved in the specific maturation or degradation of a number of bioactive peptides. The protein is Angiotensin-converting enzyme (ACE) of Haematobia irritans exigua (Buffalo fly).